Consider the following 111-residue polypeptide: Nucleoid-associated protein PSEEN1789 (111 aa).

2 disordered regions span residues 1 to 25 (MMKG…KMQE) and 89 to 111 (NSQD…KMPF).

It belongs to the YbaB/EbfC family. Homodimer.

The protein resides in the cytoplasm. It localises to the nucleoid. Functionally, binds to DNA and alters its conformation. May be involved in regulation of gene expression, nucleoid organization and DNA protection. This is Nucleoid-associated protein PSEEN1789 from Pseudomonas entomophila (strain L48).